Here is a 363-residue protein sequence, read N- to C-terminus: Putative aryl-alcohol dehydrogenase AAD3 (363 aa).

This sequence belongs to the aldo/keto reductase family. Aldo/keto reductase 2 subfamily.

The chain is Putative aryl-alcohol dehydrogenase AAD3 (AAD3) from Saccharomyces cerevisiae (strain ATCC 204508 / S288c) (Baker's yeast).